Here is a 525-residue protein sequence, read N- to C-terminus: GMP synthase [glutamine-hydrolyzing] (525 aa).

A Glutamine amidotransferase type-1 domain is found at 9-207; that stretch reads RILILDFGSQ…VLDICRCTPL (199 aa). C86 (nucleophile) is an active-site residue. Residues H181 and E183 contribute to the active site. One can recognise a GMPS ATP-PPase domain in the interval 208–400; it reads WTPAKIIEDA…LGLPYDMLYR (193 aa). An ATP-binding site is contributed by 235–241; that stretch reads SGGVDSS.

As to quaternary structure, homodimer.

The enzyme catalyses XMP + L-glutamine + ATP + H2O = GMP + L-glutamate + AMP + diphosphate + 2 H(+). It functions in the pathway purine metabolism; GMP biosynthesis; GMP from XMP (L-Gln route): step 1/1. Functionally, catalyzes the synthesis of GMP from XMP. The chain is GMP synthase [glutamine-hydrolyzing] from Sodalis glossinidius (strain morsitans).